A 226-amino-acid chain; its full sequence is Thioredoxin domain-containing protein 9 (226 aa).

One can recognise a Thioredoxin domain in the interval 74-180 (REIPSERDFF…TTETLEWRLG (107 aa)). 3 positions are modified to phosphoserine: serine 188, serine 221, and serine 223.

As to quaternary structure, forms ternary complexes with the chaperonin TCP1 complex, spanning the cylindrical chaperonin cavity and contacting at least 2 subunits.

It is found in the cytoplasm. The protein localises to the nucleus. The protein resides in the cytoskeleton. Its subcellular location is the microtubule organizing center. It localises to the centrosome. It is found in the midbody. Its function is as follows. Significantly diminishes the chaperonin TCP1 complex ATPase activity, thus negatively impacts protein folding, including that of actin or tubulin. This chain is Thioredoxin domain-containing protein 9 (TXNDC9), found in Homo sapiens (Human).